A 420-amino-acid chain; its full sequence is Melatonin receptor type 1C (420 aa).

The Extracellular segment spans residues 1–34; it reads MMEVNSTCLDCRTPGTIRTEQDAQDSASQGLTSA. N5 is a glycosylation site (N-linked (GlcNAc...) asparagine). Residues 35 to 55 traverse the membrane as a helical segment; the sequence is LAVVLIFTIVVDVLGNILVIL. Topologically, residues 56–73 are cytoplasmic; that stretch reads SVLRNKKLQNAGNLFVVS. A helical membrane pass occupies residues 74–94; that stretch reads LSIADLVVAVYPYPVILIAIF. At 95-106 the chain is on the extracellular side; it reads QNGWTLGNIHCQ. C105 and C182 form a disulfide bridge. Residues 107 to 127 form a helical membrane-spanning segment; that stretch reads ISGFLMGLSVIGSVFNITAIA. Over 128–152 the chain is Cytoplasmic; the sequence is INRYCYICHSLRYDKLYNQRSTWCY. A helical transmembrane segment spans residues 153–173; it reads LGLTWILTIIAIVPNFFVGSL. Topologically, residues 174–192 are extracellular; it reads QYDPRIFSCTFAQTVSSSY. Residues 193-213 traverse the membrane as a helical segment; sequence TITVVVVHFIVPLSVVTFCYL. The Cytoplasmic portion of the chain corresponds to 214 to 245; it reads RIWVLVIQVKHRVRQDFKQKLTQTDLRNFLTM. A helical membrane pass occupies residues 246-266; that stretch reads FVVFVLFAVCWAPLNFIGLAV. At 267–279 the chain is on the extracellular side; it reads AINPFHVAPKIPE. Residues 280-303 traverse the membrane as a helical segment; that stretch reads WLFVLSYFMAYFNSCLNAVIYGVL. Residues 304 to 420 are Cytoplasmic-facing; sequence NQNFRKEYKR…ELCKDGISQR (117 aa).

Belongs to the G-protein coupled receptor 1 family. In terms of tissue distribution, moderately expressed in dermal melanophores.

The protein localises to the cell membrane. Its function is as follows. High affinity receptor for melatonin. Likely to mediate the potent effects of melatonin on pigment aggregation in melanophores. The activity of this receptor is mediated by pertussis toxin sensitive G proteins that inhibit adenylate cyclase activity. The sequence is that of Melatonin receptor type 1C (mtnr1c) from Xenopus laevis (African clawed frog).